Consider the following 254-residue polypeptide: Small ribosomal subunit protein uS2 (254 aa).

It belongs to the universal ribosomal protein uS2 family.

The protein is Small ribosomal subunit protein uS2 of Borrelia hermsii (strain HS1 / DAH).